Consider the following 483-residue polypeptide: Probable glycosyltransferase 4 (483 aa).

The Cytoplasmic portion of the chain corresponds to 1–26 (MSKLQDRHGGEAAADVGRRARHQRLL). A helical; Signal-anchor for type II membrane protein membrane pass occupies residues 27–47 (LSFPVFPIVLLLLAPCTIFFF). Residues 48 to 483 (TSGDVPLPRI…KKTSRAARPM (436 aa)) lie on the Lumenal side of the membrane. The tract at residues 71–119 (AVAADTSPPPPSPPSSSPPPLSFPPPPPPPSSPPPPALPVVDDHSDTQR) is disordered. The span at 77-108 (SPPPPSPPSSSPPPLSFPPPPPPPSSPPPPAL) shows a compositional bias: pro residues. N-linked (GlcNAc...) asparagine glycosylation is present at N448.

This sequence belongs to the glycosyltransferase 34 family.

The protein resides in the golgi apparatus membrane. Functionally, probable glycosyltransferase that may be involved in the biosynthesis of xyloglucan. The sequence is that of Probable glycosyltransferase 4 from Oryza sativa subsp. indica (Rice).